The sequence spans 64 residues: Large ribosomal subunit protein uL29 (64 aa).

Belongs to the universal ribosomal protein uL29 family.

The polypeptide is Large ribosomal subunit protein uL29 (Synechococcus elongatus (strain ATCC 33912 / PCC 7942 / FACHB-805) (Anacystis nidulans R2)).